The following is a 354-amino-acid chain: Guanine nucleotide-binding protein G(i) subunit alpha-3 (354 aa).

The N-myristoyl glycine moiety is linked to residue G2. Residue C3 is the site of S-palmitoyl cysteine attachment. A G-alpha domain is found at 32–354 (KEVKLLLLGA…KNNLKECGLY (323 aa)). Residues 35 to 48 (KLLLLGAGESGKST) are G1 motif. The GTP site is built by G42, E43, S44, G45, K46, S47, T48, D150, S151, L175, R176, T177, R178, V179, K180, T181, V201, G203, N269, K270, D272, L273, C325, A326, and T327. S47 is a binding site for Mg(2+). A G2 motif region spans residues 173–181 (DVLRTRVKT). T181 contacts Mg(2+). The tract at residues 196-205 (FKMFDVGGQR) is G3 motif. The G4 motif stretch occupies residues 265–272 (ILFLNKKD). Residues 324 to 329 (TCATDT) form a G5 motif region.

The protein belongs to the G-alpha family. G(i/o/t/z) subfamily. As to quaternary structure, heterotrimeric G proteins are composed of 3 units; alpha, beta and gamma. The alpha subunit contains the guanine nucleotide binding site. GTP binding causes dissociation of the heterotrimer, liberating the individual subunits so that they can interact with downstream effector proteins. Forms a complex with CCDC88A/GIV and EGFR which leads to enhanced EGFR signaling and triggering of cell migration; ligand stimulation is required for recruitment of GNAI3 to the complex. Interacts (inactive GDP-bound form) with CCDC88A/GIV (via GBA motif); the interaction leads to activation of GNAI3. Interacts (inactive GDP-bound form) with CCDC88C/DAPLE (via GBA motif); the interaction leads to activation of GNAI3. Interacts (inactive GDP-bound form) with NUCB1 (via GBA motif) and NUCB2 (via GBA motif); the interaction leads to activation of GNAI3. Interacts (inactive GDP-bound form) with PLCD4 (via GBA motif); the interaction leads to activation of GNAI3. Interacts with INSR; the interaction is probably mediated by CCDC88A/GIV. Interacts with GPSM1. Interacts (GDP-bound form) with GPSM2 (via GoLoco domains). Does not interact with RGS2. Interacts with RGS8 and RGS10; this strongly enhances the intrinsic GTPase activity. Interacts with RGS16; this strongly enhances the intrinsic GTPase activity. Interacts with RGS12. Interacts (via active GTP- or inactive GDP-bound form) with RGS14. Interacts (via active GTP-bound form) with TRPC5 (via ANK repeats) in a homotetrameric ion channel; the interaction is direct and activates the channel activity.

It localises to the cytoplasm. Its subcellular location is the cell membrane. It is found in the cytoskeleton. The protein resides in the microtubule organizing center. The protein localises to the centrosome. In terms of biological role, heterotrimeric guanine nucleotide-binding proteins (G proteins) function as transducers downstream of G protein-coupled receptors (GPCRs) in numerous signaling cascades. The alpha chain contains the guanine nucleotide binding site and alternates between an active, GTP-bound state and an inactive, GDP-bound state. Signaling by an activated GPCR promotes GDP release and GTP binding. The alpha subunit has a low GTPase activity that converts bound GTP to GDP, thereby terminating the signal. Both GDP release and GTP hydrolysis are modulated by numerous regulatory proteins. Signaling is mediated via effector proteins, such as adenylate cyclase. Inhibits adenylate cyclase activity, leading to decreased intracellular cAMP levels. Stimulates the activity of receptor-regulated K(+) channels. The active GTP-bound form prevents the association of RGS14 with centrosomes and is required for the translocation of RGS14 from the cytoplasm to the plasma membrane. May play a role in cell division. The active GTP-bound form activates the calcium permeant TRPC5 ion channels. This Cricetulus griseus (Chinese hamster) protein is Guanine nucleotide-binding protein G(i) subunit alpha-3 (GNAI3).